Consider the following 89-residue polypeptide: HssA/B-like protein 14 (89 aa).

This sequence belongs to the hssA/B family.

The chain is HssA/B-like protein 14 (hssl14) from Dictyostelium discoideum (Social amoeba).